The following is a 334-amino-acid chain: Leucine-rich repeat-containing protein 39 (334 aa).

LRR repeat units follow at residues 59–82 (EDGR…LLKL), 83–105 (NQLQ…IGRF), 106–128 (QHLI…IGLL), 129–151 (TRLQ…LSNC), 153–175 (SLEK…LSKL), 176–198 (LKLT…VLDM), 199–221 (PALE…LDRM), 223–244 (SLHT…IRNM), 245–269 (KNLG…EMTS), and 272–295 (FVNF…VDGE).

As to quaternary structure, interacts with MYH7 (via C-terminus). In terms of tissue distribution, expressed in heart and skeletal muscle (at protein level). Also detected in kidney (at protein level). Not detected in other tissues tested (at protein level).

Its subcellular location is the cytoplasm. The protein localises to the myofibril. It is found in the sarcomere. It localises to the m line. Component of the sarcomeric M-band which plays a role in myocyte response to biomechanical stress. May regulate expression of other M-band proteins via an SRF-dependent pathway. Important for normal contractile function in heart. This chain is Leucine-rich repeat-containing protein 39, found in Rattus norvegicus (Rat).